A 259-amino-acid polypeptide reads, in one-letter code: Eukaryotic translation initiation factor 4E1 (259 aa).

A disordered region spans residues 1-70; sequence MQSDFHRMKN…TATTTAPAGD (70 aa). Residues 18–27 are compositionally biased toward polar residues; it reads FKTSAPSTEQ. Positions 41 to 51 are enriched in basic and acidic residues; sequence EAKDVKPKEDP. The segment covering 54 to 70 has biased composition (low complexity); sequence TGEPAGNTATTTAPAGD. MRNA contacts are provided by residues 100-101, 146-147, and 199-204; these read WE and RGKSNK.

The protein belongs to the eukaryotic initiation factor 4E family. EIF4F is a multi-subunit complex, the composition of which varies with external and internal environmental conditions. It is composed of at least eIF4A, eIF4E1 and eIF4G1. Recruited by cup in oocytes and in early embryos, preventing the interaction with eIF4G. The interaction with cup therefore prevents the translation of key transcripts such as oskar (osk) and nanos (nos) in some regions in the early embryo. Interacts with mxt. Interacts with 4E-T and Thor. Forms a RNP containing at least me31B, eIF4E1, cup, tral and pAbp; this interaction is required for the translational silencing of maternal mRNAs during the maternal-to-zygotic transition. Post-translationally, phosphorylation increases the ability of the protein to bind to mRNA caps and to form the eIF4F complex. As to expression, expressed at the posterior end of developing oocytes (at protein level). Preferential expression in the pole cells, at different developmental stages.

The protein resides in the cytoplasm. It localises to the cytoplasmic ribonucleoprotein granule. It is found in the nucleus. Its subcellular location is the nuclear body. Functionally, recognizes and binds the 7-methylguanosine (m7G)-containing mRNA cap during an early step in the initiation of protein synthesis and facilitates ribosome binding by inducing the unwinding of the mRNAs secondary structures. In 0-1 hour embryos, forms a complex with me31B, cup, tral and pAbp which binds to various mRNAs including maternal mRNAs, and down-regulates their expression during the maternal-to-zygotic transition. The chain is Eukaryotic translation initiation factor 4E1 from Drosophila melanogaster (Fruit fly).